The following is a 136-amino-acid chain: Protein NrdI (136 aa).

It belongs to the NrdI family.

Probably involved in ribonucleotide reductase function. This is Protein NrdI from Escherichia coli O127:H6 (strain E2348/69 / EPEC).